A 347-amino-acid chain; its full sequence is D-alanine--D-alanine ligase (347 aa).

In terms of domain architecture, ATP-grasp spans 134-332; sequence KLYAKDLGVK…LAQSLPKTPK (199 aa). 161-216 contacts ATP; sequence LIGFNFPFIVKPSNAGSSLGVNVVKEEKELIYALDSAFEYSKEVLIEPFIQGVKEY. Residues Asp-288, Glu-300, and Asn-302 each coordinate Mg(2+).

It belongs to the D-alanine--D-alanine ligase family. Mg(2+) is required as a cofactor. The cofactor is Mn(2+).

It localises to the cytoplasm. It catalyses the reaction 2 D-alanine + ATP = D-alanyl-D-alanine + ADP + phosphate + H(+). Its pathway is cell wall biogenesis; peptidoglycan biosynthesis. Its function is as follows. Cell wall formation. The protein is D-alanine--D-alanine ligase of Helicobacter pylori (strain J99 / ATCC 700824) (Campylobacter pylori J99).